A 1054-amino-acid polypeptide reads, in one-letter code: MEDSATKHIIQMTGFKMEEKEALVKLLLKLDCTFIKSEKYKNCTHLIAERLCKSEKFLAACAAGKWVLTKDYIIHSAKSGRWLDETTYEWGYKIEKDSHYSPQMQSAPKRWREELKRTGAPGAFHRWKVVLLVRADKRSDSLVRVLEAGKANVILPKNSPSGITHVIASNARISAEREQENFKAPFYPIQYLGDFLLEKEIQNDEHSQISPAWTKYNNQEKGNDVGFPEMKGAGENMYRTQNKMENHNKNVSDRFVLSEHHKKKFKDFRKDIRSVKKRNTLRRHGLENQKETKKKDKNIQRSYILRKKNKKEGYCKTDDAHDTIRSMLKKRGHYREQKEMKNPLLTDGTKESKTKDVKTNMNLIEIKNALKKQIYKDIYRAQAVRYNCIRVDKQPVYNVEVKNSEFPRGILNLIENLIEGQFFKEAIEELSSLQAHYIPPVCLLHAILENVLQDKIDTFSGRYFHILSALLHLHPPWKSPAMLKYYLELFQCPTCMKGAWDFTEVLIRSCLFNEDFCHQISENISTKVVNLTLLKFFFNLLEGEVRHLSQKLCDWSDSQSLKVTEKAILHEIFWSGSETSGLLTKPVNMLLEWTIYSHKEKCKSNDVFKHELSYLLTGILGAAVDYWIFLGIQMGRNVIRHMSDDLGSYISLSCDDFSSKELEIFICSFSSSWLQMFVAEAIFKKLCLQGPTSTCTEPLSLQKIIDSYLPILGKMDIHGAGKMQSPKKLCQRPCLESQRALLMLNGAKRKQAEGRPELLELNRAKCSSSLKKLKKKSEELSCSKENCPSLVTKMNFHKTNLKGETALHRVCIKNQVEKLIILLSLPGIDINVKDNAGWTPLHEACNYGNTECVQEILQRCPEVDLLTQVDGVTPLHDALSNGHVEIGKLLLQRGGPELLQQRNSKGELPLDYVLSPKDKEELFAITNIDDTVDNFHAKTQKHFYHQQLEFGSFLLSRMLINFCSIFDLSSEFILAFKGLGHLNELLMACNSDTEASNAHTDWLLDVYARNIKTLKKLPSVLKELPENLNVCPGVHTEALLVTLKMMCQSITELS.

2 consecutive BRCT domains span residues 2–80 (EDSA…AKSG) and 121–199 (PGAF…LLEK). The tract at residues 283 to 303 (RHGLENQKETKKKDKNIQRSY) is disordered. Positions 284-299 (HGLENQKETKKKDKNI) are enriched in basic and acidic residues. Residues 407-1054 (PRGILNLIEN…MMCQSITELS (648 aa)) are NSE5-like domain; mediates interaction with SLF2. ANK repeat units follow at residues 802–832 (KGET…DINV), 836–865 (AGWT…EVDL), and 870–900 (DGVT…ELLQ).

As to quaternary structure, interacts (via BRCT domains) with RAD18 (via C-terminus and phosphorylated form); this interaction is required for efficient repair of UV-induced DNA damage. Interacts (via N-terminus) with SLF2; this interaction links RAD18 to the SMC5-SMC6 complex. Interacts (via BRCT domains) with RAD18; this interaction occurs in a SLF2-independent manner. Interacts with SMC6. As to expression, widely expressed. Expressed in testis. Expressed in spermatocytes.

It is found in the nucleus. It localises to the cytoplasm. The protein resides in the cytoskeleton. The protein localises to the microtubule organizing center. Its subcellular location is the centrosome. Functionally, plays a role in the DNA damage response (DDR) pathway by regulating postreplication repair of UV-damaged DNA and genomic stability maintenance. The SLF1-SLF2 complex acts to link RAD18 with the SMC5-SMC6 complex at replication-coupled interstrand cross-links (ICL) and DNA double-strand breaks (DSBs) sites on chromatin during DNA repair in response to stalled replication forks. Promotes the recruitment of SLF2 and the SMC5-SMC6 complex to DNA lesions. This chain is SMC5-SMC6 complex localization factor protein 1, found in Mus musculus (Mouse).